The following is a 121-amino-acid chain: Large ribosomal subunit protein bL12 (121 aa).

The protein belongs to the bacterial ribosomal protein bL12 family. In terms of assembly, homodimer. Part of the ribosomal stalk of the 50S ribosomal subunit. Forms a multimeric L10(L12)X complex, where L10 forms an elongated spine to which 2 to 4 L12 dimers bind in a sequential fashion. Binds GTP-bound translation factors.

Its function is as follows. Forms part of the ribosomal stalk which helps the ribosome interact with GTP-bound translation factors. Is thus essential for accurate translation. This is Large ribosomal subunit protein bL12 from Escherichia coli O81 (strain ED1a).